A 39-amino-acid chain; its full sequence is Photosystem II reaction center protein L (39 aa).

The chain crosses the membrane as a helical span at residues 18-38 (SLYLGLLLVFVLGILFSSYFF).

It belongs to the PsbL family. In terms of assembly, PSII is composed of 1 copy each of membrane proteins PsbA, PsbB, PsbC, PsbD, PsbE, PsbF, PsbH, PsbI, PsbJ, PsbK, PsbL, PsbM, PsbT, PsbX, PsbY, Psb30/Ycf12, peripheral proteins PsbO, CyanoQ (PsbQ), PsbU, PsbV and a large number of cofactors. It forms dimeric complexes.

Its subcellular location is the cellular thylakoid membrane. Functionally, one of the components of the core complex of photosystem II (PSII). PSII is a light-driven water:plastoquinone oxidoreductase that uses light energy to abstract electrons from H(2)O, generating O(2) and a proton gradient subsequently used for ATP formation. It consists of a core antenna complex that captures photons, and an electron transfer chain that converts photonic excitation into a charge separation. This subunit is found at the monomer-monomer interface and is required for correct PSII assembly and/or dimerization. The sequence is that of Photosystem II reaction center protein L from Prochlorococcus marinus (strain SARG / CCMP1375 / SS120).